A 160-amino-acid chain; its full sequence is Small ribosomal subunit protein uS7 (160 aa).

This sequence belongs to the universal ribosomal protein uS7 family. In terms of assembly, part of the 30S ribosomal subunit. Contacts proteins S9 and S11.

Its function is as follows. One of the primary rRNA binding proteins, it binds directly to 16S rRNA where it nucleates assembly of the head domain of the 30S subunit. Is located at the subunit interface close to the decoding center, probably blocks exit of the E-site tRNA. This is Small ribosomal subunit protein uS7 from Rickettsia prowazekii (strain Madrid E).